Here is a 343-residue protein sequence, read N- to C-terminus: Phospholipid phosphatase-related protein type 2 (343 aa).

A run of 3 helical transmembrane segments spans residues 12 to 32 (FSII…VVLL), 72 to 92 (ALIY…GELA), and 129 to 149 (FLGV…AGQV). An N-linked (GlcNAc...) asparagine glycan is attached at N165. 3 helical membrane-spanning segments follow: residues 210 to 230 (AALC…VFRV), 239 to 259 (SLCL…VAEY), and 266 to 286 (VLAG…CVVH). The disordered stretch occupies residues 291-343 (RPHSGRRLSPWEDLSQAPTMDSPLEKNPRPAGRIRHRHGSPHPSRRTVPAVAT). Phosphoserine is present on residues S299 and S312. Over residues 322–335 (GRIRHRHGSPHPSR) the composition is skewed to basic residues.

Belongs to the PA-phosphatase related phosphoesterase family.

It localises to the membrane. The chain is Phospholipid phosphatase-related protein type 2 from Mus musculus (Mouse).